A 102-amino-acid polypeptide reads, in one-letter code: Large ribosomal subunit protein bL21 (102 aa).

It belongs to the bacterial ribosomal protein bL21 family. As to quaternary structure, part of the 50S ribosomal subunit. Contacts protein L20.

In terms of biological role, this protein binds to 23S rRNA in the presence of protein L20. This Bacillus anthracis (strain A0248) protein is Large ribosomal subunit protein bL21.